A 371-amino-acid polypeptide reads, in one-letter code: tRNA-specific 2-thiouridylase MnmA (371 aa).

ATP-binding positions include 7–14 (GLSGGVDS) and M33. The interaction with target base in tRNA stretch occupies residues 103 to 105 (NPD). Catalysis depends on C108, which acts as the Nucleophile. A disulfide bond links C108 and C201. G133 contacts ATP. The segment at 151-153 (KDQ) is interaction with tRNA. The active-site Cysteine persulfide intermediate is the C201. The tract at residues 308–309 (RY) is interaction with tRNA.

The protein belongs to the MnmA/TRMU family.

The protein resides in the cytoplasm. It catalyses the reaction S-sulfanyl-L-cysteinyl-[protein] + uridine(34) in tRNA + AH2 + ATP = 2-thiouridine(34) in tRNA + L-cysteinyl-[protein] + A + AMP + diphosphate + H(+). Its function is as follows. Catalyzes the 2-thiolation of uridine at the wobble position (U34) of tRNA, leading to the formation of s(2)U34. The polypeptide is tRNA-specific 2-thiouridylase MnmA (Mycoplasmopsis pulmonis (strain UAB CTIP) (Mycoplasma pulmonis)).